The sequence spans 377 residues: Succinyl-diaminopimelate desuccinylase (377 aa).

His66 serves as a coordination point for Zn(2+). Residue Asp68 is part of the active site. Asp99 is a Zn(2+) binding site. Catalysis depends on Glu133, which acts as the Proton acceptor. Zn(2+) contacts are provided by Glu134, Glu163, and His349.

It belongs to the peptidase M20A family. DapE subfamily. As to quaternary structure, homodimer. Zn(2+) serves as cofactor. It depends on Co(2+) as a cofactor.

The catalysed reaction is N-succinyl-(2S,6S)-2,6-diaminopimelate + H2O = (2S,6S)-2,6-diaminopimelate + succinate. Its pathway is amino-acid biosynthesis; L-lysine biosynthesis via DAP pathway; LL-2,6-diaminopimelate from (S)-tetrahydrodipicolinate (succinylase route): step 3/3. Its function is as follows. Catalyzes the hydrolysis of N-succinyl-L,L-diaminopimelic acid (SDAP), forming succinate and LL-2,6-diaminopimelate (DAP), an intermediate involved in the bacterial biosynthesis of lysine and meso-diaminopimelic acid, an essential component of bacterial cell walls. This Legionella pneumophila (strain Lens) protein is Succinyl-diaminopimelate desuccinylase.